We begin with the raw amino-acid sequence, 1152 residues long: Nucleolar protein 6 (1152 aa).

2 disordered regions span residues 1-30 and 36-55; these read MPSA…DPEV and EGMD…EPPA. A Phosphoserine modification is found at S65. Residues 92–128 adopt a coiled-coil conformation; the sequence is LLRLQVEELLKEVRLSEKKKERIDNFLKEVTKRIQKV. A phosphoserine mark is found at S292 and S817.

The protein belongs to the NRAP family. As to quaternary structure, part of the small subunit (SSU) processome, composed of more than 70 proteins and the RNA chaperone small nucleolar RNA (snoRNA) U3. Interacts with RRP7A; required for NOL6 localization to nucleolus. As to expression, ubiquitously expressed.

It localises to the nucleus. It is found in the nucleolus. The protein localises to the chromosome. Its function is as follows. Part of the small subunit (SSU) processome, first precursor of the small eukaryotic ribosomal subunit. During the assembly of the SSU processome in the nucleolus, many ribosome biogenesis factors, an RNA chaperone and ribosomal proteins associate with the nascent pre-rRNA and work in concert to generate RNA folding, modifications, rearrangements and cleavage as well as targeted degradation of pre-ribosomal RNA by the RNA exosome. The sequence is that of Nucleolar protein 6 (Nol6) from Mus musculus (Mouse).